Consider the following 68-residue polypeptide: Large ribosomal subunit protein uL29 (68 aa).

Belongs to the universal ribosomal protein uL29 family.

The protein is Large ribosomal subunit protein uL29 of Methanobrevibacter smithii (strain ATCC 35061 / DSM 861 / OCM 144 / PS).